The chain runs to 430 residues: Adenylosuccinate synthetase (430 aa).

GTP contacts are provided by residues 17-23 (GDEGKGK) and 45-47 (GHT). Residue aspartate 18 is the Proton acceptor of the active site. Aspartate 18 and glycine 45 together coordinate Mg(2+). Residues 18–21 (DEGK), 43–46 (NAGH), threonine 139, arginine 153, asparagine 229, threonine 244, and arginine 308 each bind IMP. Histidine 46 acts as the Proton donor in catalysis. 304–310 (TVTGRRR) is a binding site for substrate. Residues arginine 310, 336–338 (KLD), and 418–420 (GVG) contribute to the GTP site.

It belongs to the adenylosuccinate synthetase family. As to quaternary structure, homodimer. It depends on Mg(2+) as a cofactor.

It is found in the cytoplasm. It carries out the reaction IMP + L-aspartate + GTP = N(6)-(1,2-dicarboxyethyl)-AMP + GDP + phosphate + 2 H(+). Its pathway is purine metabolism; AMP biosynthesis via de novo pathway; AMP from IMP: step 1/2. Its function is as follows. Plays an important role in the de novo pathway and in the salvage pathway of purine nucleotide biosynthesis. Catalyzes the first committed step in the biosynthesis of AMP from IMP. The protein is Adenylosuccinate synthetase of Cryptococcus neoformans var. neoformans serotype D (strain B-3501A) (Filobasidiella neoformans).